Consider the following 892-residue polypeptide: Alanine--tRNA ligase (892 aa).

Histidine 578, histidine 582, cysteine 681, and histidine 685 together coordinate Zn(2+).

This sequence belongs to the class-II aminoacyl-tRNA synthetase family. Zn(2+) is required as a cofactor.

Its subcellular location is the cytoplasm. The enzyme catalyses tRNA(Ala) + L-alanine + ATP = L-alanyl-tRNA(Ala) + AMP + diphosphate. Its function is as follows. Catalyzes the attachment of alanine to tRNA(Ala) in a two-step reaction: alanine is first activated by ATP to form Ala-AMP and then transferred to the acceptor end of tRNA(Ala). Also edits incorrectly charged Ser-tRNA(Ala) and Gly-tRNA(Ala) via its editing domain. The sequence is that of Alanine--tRNA ligase from Cutibacterium acnes (strain DSM 16379 / KPA171202) (Propionibacterium acnes).